We begin with the raw amino-acid sequence, 519 residues long: Seed lectin (519 aa).

2 disulfides stabilise this stretch: cysteine 249/cysteine 258 and cysteine 274/cysteine 293. 2 Ricin B-type lectin domains span residues glutamate 261–glycine 387 and valine 390–phenylalanine 518. Residues aspartate 271 to serine 311 form a 1-alpha repeat. Residues aspartate 276–glycine 279 and glutamine 296–asparagine 298 each bind a carbohydrate. One copy of the 1-beta repeat lies at leucine 312–asparagine 352. A disulfide bond links cysteine 315 and cysteine 332. Residues glutamate 356–asparagine 388 form a 1-gamma repeat. N-linked (GlcNAc...) asparagine glycosylation is present at asparagine 370. The 2-alpha repeat unit spans residues aspartate 401 to valine 438. 2 disulfide bridges follow: cysteine 404/cysteine 419 and cysteine 445/cysteine 464. One copy of the 2-beta repeat lies at arginine 442–threonine 482. Residues aspartate 454, aspartate 491–arginine 494, histidine 505–histidine 508, and asparagine 512 contribute to the a carbohydrate site. A 2-gamma repeat occupies glutamine 486–glutamine 513.

The protein in the N-terminal section; belongs to the ribosome-inactivating protein family. Type 2 RIP subfamily. Heterotrimer consisting of Aalpha, Abeta and B chains with Abeta and B being disulfide-linked.

Functionally, seed lectin similar to type 2 ribosome-inactivating proteins. The Aalpha and Abeta chains constitute the rRNA glycosidase domain and the B chain the carbohydrate-binding lectin domain. Is predicted to have no glycosidase activity and, hence, to be non-toxic, due to small changes in both the nucleotide binding and carbohydrate binding capabilities. Binds galactose and derivatives with a preference for the beta-anomeric forms. Binds prophyrins. Has hemagglutinating activity towards rabbit and human erythrocytes. This chain is Seed lectin, found in Trichosanthes anguina (Snake gourd).